A 548-amino-acid polypeptide reads, in one-letter code: Membrane protein insertase YidC (548 aa).

The chain crosses the membrane as a helical span at residues 6–26 (NLLVIALLFVSFMIWQAWEQD). The interval 28-55 (NPQPQAQQTTQTTTTAAGSAADQGVPAS) is disordered. Residues 30 to 50 (QPQAQQTTQTTTTAAGSAADQ) show a composition bias toward low complexity. 4 helical membrane passes run 350–370 (FVGN…GIMY), 420–440 (LGGC…YYML), 458–478 (LSAQ…MFFI), and 499–519 (PVIF…YYIV).

The protein belongs to the OXA1/ALB3/YidC family. Type 1 subfamily. Interacts with the Sec translocase complex via SecD. Specifically interacts with transmembrane segments of nascent integral membrane proteins during membrane integration.

Its subcellular location is the cell inner membrane. In terms of biological role, required for the insertion and/or proper folding and/or complex formation of integral membrane proteins into the membrane. Involved in integration of membrane proteins that insert both dependently and independently of the Sec translocase complex, as well as at least some lipoproteins. Aids folding of multispanning membrane proteins. This chain is Membrane protein insertase YidC, found in Escherichia coli O127:H6 (strain E2348/69 / EPEC).